Reading from the N-terminus, the 238-residue chain is tRNA (guanine-N(7)-)-methyltransferase (238 aa).

Residues glutamate 70, aspartate 95, aspartate 122, and aspartate 145 each coordinate S-adenosyl-L-methionine. Aspartate 145 is an active-site residue. Residues lysine 149, aspartate 181, and 216–219 (TKFE) contribute to the substrate site.

This sequence belongs to the class I-like SAM-binding methyltransferase superfamily. TrmB family.

It catalyses the reaction guanosine(46) in tRNA + S-adenosyl-L-methionine = N(7)-methylguanosine(46) in tRNA + S-adenosyl-L-homocysteine. It functions in the pathway tRNA modification; N(7)-methylguanine-tRNA biosynthesis. Catalyzes the formation of N(7)-methylguanine at position 46 (m7G46) in tRNA. This chain is tRNA (guanine-N(7)-)-methyltransferase, found in Neisseria meningitidis serogroup B (strain ATCC BAA-335 / MC58).